A 593-amino-acid chain; its full sequence is 2-succinyl-5-enolpyruvyl-6-hydroxy-3-cyclohexene-1-carboxylate synthase (593 aa).

The protein belongs to the TPP enzyme family. MenD subfamily. Homodimer. Mg(2+) is required as a cofactor. Requires Mn(2+) as cofactor. It depends on thiamine diphosphate as a cofactor.

It catalyses the reaction isochorismate + 2-oxoglutarate + H(+) = 5-enolpyruvoyl-6-hydroxy-2-succinyl-cyclohex-3-ene-1-carboxylate + CO2. Its pathway is quinol/quinone metabolism; 1,4-dihydroxy-2-naphthoate biosynthesis; 1,4-dihydroxy-2-naphthoate from chorismate: step 2/7. The protein operates within quinol/quinone metabolism; menaquinone biosynthesis. Functionally, catalyzes the thiamine diphosphate-dependent decarboxylation of 2-oxoglutarate and the subsequent addition of the resulting succinic semialdehyde-thiamine pyrophosphate anion to isochorismate to yield 2-succinyl-5-enolpyruvyl-6-hydroxy-3-cyclohexene-1-carboxylate (SEPHCHC). The polypeptide is 2-succinyl-5-enolpyruvyl-6-hydroxy-3-cyclohexene-1-carboxylate synthase (Pelodictyon phaeoclathratiforme (strain DSM 5477 / BU-1)).